Consider the following 288-residue polypeptide: Homoserine kinase (288 aa).

Residue 79–89 (PPARGLGSSSA) participates in ATP binding.

The protein belongs to the GHMP kinase family. Homoserine kinase subfamily.

The protein resides in the cytoplasm. The catalysed reaction is L-homoserine + ATP = O-phospho-L-homoserine + ADP + H(+). The protein operates within amino-acid biosynthesis; L-threonine biosynthesis; L-threonine from L-aspartate: step 4/5. In terms of biological role, catalyzes the ATP-dependent phosphorylation of L-homoserine to L-homoserine phosphate. The chain is Homoserine kinase from Listeria monocytogenes serotype 4a (strain HCC23).